The following is a 313-amino-acid chain: WD repeat-containing protein 82-B (313 aa).

WD repeat units follow at residues 19-58 (ENSD…PKRT), 105-144 (GHSK…CQGL), 146-184 (HLQG…KGPF), 192-231 (DRTC…VMHT), 236-276 (NNSK…KVAV), and 280-313 (KHTG…TIDD).

The protein belongs to the WD repeat SWD2 family. As to quaternary structure, component of the SET1/COMPASS complex. Component of the PNUTS-PP1 phosphatase complex.

It localises to the nucleus. The protein resides in the chromosome. Its subcellular location is the cytoplasm. Regulatory component of the SET1/COMPASS complex implicated in the tethering of this complex to transcriptional start sites of active genes. Facilitates histone H3 'Lys-4' methylation (H3K4me) via recruitment of the SETD1A or SETD1B to the 'Ser-5' phosphorylated C-terminal domain (CTD) of RNA polymerase II large subunit (POLR2A). Component of the PNUTS-PP1 protein phosphatase complex, a protein phosphatase 1 (PP1) complex that promotes RNA polymerase II transcription pause-release, allowing transcription elongation. This chain is WD repeat-containing protein 82-B (wdr82-b), found in Xenopus laevis (African clawed frog).